Consider the following 142-residue polypeptide: Group IIE secretory phospholipase A2 (142 aa).

The first 19 residues, 1 to 19, serve as a signal peptide directing secretion; that stretch reads MKSPHVLVFLCLLVALVTG. The Ca(2+) site is built by Asp-41, Gly-43, Tyr-45, Gly-47, and Gly-49. 7 disulfides stabilise this stretch: Cys-44–Cys-135, Cys-46–Cys-62, Cys-61–Cys-115, Cys-67–Cys-142, Cys-68–Cys-108, Cys-77–Cys-101, and Cys-95–Cys-106. His-65 is a catalytic residue. Position 66 (Asp-66) interacts with Ca(2+). Asp-109 is an active-site residue. Ca(2+) is bound by residues Tyr-130 and Asn-132.

This sequence belongs to the phospholipase A2 family. Ca(2+) is required as a cofactor. In terms of tissue distribution, restricted to the brain, heart, lung, and placenta.

The protein localises to the secreted. The protein resides in the cytoplasm. It catalyses the reaction a 1,2-diacyl-sn-glycero-3-phosphoethanolamine + H2O = a 1-acyl-sn-glycero-3-phosphoethanolamine + a fatty acid + H(+). It carries out the reaction 1-hexadecanoyl-2-(9Z-octadecenoyl)-sn-glycero-3-phosphoethanolamine + H2O = 1-hexadecanoyl-sn-glycero-3-phosphoethanolamine + (9Z)-octadecenoate + H(+). The catalysed reaction is 1-hexadecanoyl-2-(9Z,12Z-octadecadienoyl)-sn-glycero-3-phosphoethanolamine + H2O = 1-hexadecanoyl-sn-glycero-3-phosphoethanolamine + (9Z,12Z)-octadecadienoate + H(+). The enzyme catalyses 1-hexadecanoyl-2-(5Z,8Z,11Z,14Z-eicosatetraenoyl)-sn-glycero-3-phosphoethanolamine + H2O = 1-hexadecanoyl-sn-glycero-3-phosphoethanolamine + (5Z,8Z,11Z,14Z)-eicosatetraenoate + H(+). It catalyses the reaction 1,2-dihexadecanoyl-sn-glycero-3-phospho-(1'-sn-glycerol) + H2O = 1-hexadecanoyl-sn-glycero-3-phospho-(1'-sn-glycerol) + hexadecanoate + H(+). It carries out the reaction 1-hexadecanoyl-2-(9Z-octadecenoyl)-sn-glycero-3-phosphoglycerol + H2O = 1-hexadecanoyl-sn-glycero-3-phosphoglycerol + (9Z)-octadecenoate + H(+). The catalysed reaction is a 1,2-diacyl-sn-glycero-3-phosphocholine + H2O = a 1-acyl-sn-glycero-3-phosphocholine + a fatty acid + H(+). The enzyme catalyses 1,2-dihexadecanoyl-sn-glycero-3-phosphocholine + H2O = 1-hexadecanoyl-sn-glycero-3-phosphocholine + hexadecanoate + H(+). It catalyses the reaction 1-hexadecanoyl-2-(9Z-octadecenoyl)-sn-glycero-3-phosphocholine + H2O = 1-hexadecanoyl-sn-glycero-3-phosphocholine + (9Z)-octadecenoate + H(+). It carries out the reaction 1-hexadecanoyl-2-(9Z,12Z-octadecadienoyl)-sn-glycero-3-phosphocholine + H2O = (9Z,12Z)-octadecadienoate + 1-hexadecanoyl-sn-glycero-3-phosphocholine + H(+). The catalysed reaction is 1-hexadecanoyl-2-(4Z,7Z,10Z,13Z,16Z,19Z-docosahexaenoyl)-sn-glycero-3-phosphocholine + H2O = (4Z,7Z,10Z,13Z,16Z,19Z)-docosahexaenoate + 1-hexadecanoyl-sn-glycero-3-phosphocholine + H(+). In terms of biological role, secretory calcium-dependent phospholipase A2 that primarily targets extracellular phospholipids. Hydrolyzes the ester bond of the fatty acyl group attached at sn-2 position of phospholipids (phospholipase A2 activity), releasing various unsaturated fatty acids including oleoate, linoleoate, arachidonate, docosahexaenoate and lysophosphatidylethanolamines in preference to lysophosphatidylcholines. In response to high-fat diet, hydrolyzes minor lipoprotein phospholipids including phosphatidylserines, phosphatidylinositols and phosphatidylglycerols, altering lipoprotein composition and fat storage in adipose tissue and liver. May act in an autocrine and paracrine manner. Contributes to lipid remodeling of cellular membranes and generation of lipid mediators involved in pathogen clearance. Cleaves sn-2 fatty acyl chains of phosphatidylglycerols and phosphatidylethanolamines, which are major components of membrane phospholipids in bacteria. Acts as a hair follicle phospholipase A2. Selectively releases lysophosphatidylethanolamines (LPE) and various unsaturated fatty acids in skin to regulate hair follicle homeostasis. May regulate the inflammatory response by releasing arachidonate, a precursor of prostaglandins and leukotrienes. Upon allergen exposure, may participate in allergic inflammatory response by enhancing leukotriene C4 synthesis and degranulation in mast cells. The protein is Group IIE secretory phospholipase A2 (PLA2G2E) of Homo sapiens (Human).